A 472-amino-acid chain; its full sequence is MEFPDHSRQLLQCLSQQRHQGFLCDCTVLVGEAQFRAHRAVLASCSMYFHLFYRDQLDKRDIVHLNSDIVTAPAFSLLLQFMYEGKLEFSNLPVEDVLAAASYLHMYDIVKVCKGKLKDKELNSGEKIIDDGEKDDKPVDSEEHHEHSFDASQQKISTLDSVKPIWKEKVSGLSGLSSDLIGVNSVPAEAVMCKRAAGKTKANDSSPSSPLSQRSANHTHPPSDRDGALDLSFKPMPGRDSFHPSYVFGQLVSDSQQQGSLPLVKHEQDLLSEQEDSQAKSPKSQQVGNPAKSLVTGLGHMFTGNGNSHTREDDLYQDRDESEDEMDSSDLSTSGVLVSPGQICICPLCSKVFPSPHILQLHLSSHFKDKDNSRIKMSPDGSVPTCTICGKTFSCMYTLKRHERTHSGEKPFTCGQCGKSFQYSHNLSRHAVVHTREKPHACKWCERRFTQSGDLYRHIRKFHCGLVKSLVV.

The BTB domain maps to 24 to 91; it reads CDCTVLVGEA…MYEGKLEFSN (68 aa). Residues 127-149 are compositionally biased toward basic and acidic residues; it reads KIIDDGEKDDKPVDSEEHHEHSF. Disordered regions lie at residues 127 to 155, 197 to 236, and 269 to 334; these read KIID…SQQK, AGKT…FKPM, and DLLS…LSTS. A compositionally biased stretch (low complexity) spans 205–215; it reads SSPSSPLSQRS. A compositionally biased stretch (polar residues) spans 279-288; the sequence is AKSPKSQQVG. A compositionally biased stretch (basic and acidic residues) spans 309 to 319; sequence HTREDDLYQDR. 4 C2H2-type zinc fingers span residues 344–366, 384–406, 412–434, and 440–463; these read CICP…LSSH, PTCT…ERTH, FTCG…AVVH, and HACK…RKFH.

This sequence belongs to the krueppel C2H2-type zinc-finger protein family. ZBTB18 subfamily.

It is found in the nucleus. Its function is as follows. Transcriptional repressor that plays a role in various developmental processes. Specifically binds the consensus DNA sequence 5'-[AC]ACATCTG[GT][AC]-3' which contains the E box core, and acts by recruiting chromatin remodeling multiprotein complexes. The chain is Zinc finger and BTB domain-containing protein 18.2 (zbtb18.2) from Xenopus laevis (African clawed frog).